The primary structure comprises 490 residues: 5'-3' exonuclease PLD3 (490 aa).

The Cytoplasmic portion of the chain corresponds to 1 to 38; that stretch reads MKPKLMYQELKVPAEEPANELPMNEIEAWKAAEKKARW. Residues 39 to 59 traverse the membrane as a helical; Signal-anchor for type II membrane protein segment; it reads VLLVLILAVVGFGALMTQLFL. Residues 60–490 lie on the Lumenal side of the membrane; that stretch reads WEYGDLHLFG…DSVGNACRLL (431 aa). 2 disulfide bridges follow: C77–C239 and C81–C237. N97 and N132 each carry an N-linked (GlcNAc...) asparagine glycan. The PLD phosphodiesterase 1 domain occupies 196–223; that stretch reads THGVLHTKFWVVDQTHFYLGSANMDWRS. Active-site residues include H201, K203, and D208. The Proton donor role is filled by H201. Phosphate-binding residues include H201 and K203. N218 lines the phosphate pocket. Residues N236, N284, and N387 are each glycosylated (N-linked (GlcNAc...) asparagine). Residues C366 and C487 are joined by a disulfide bond. Positions 411–437 constitute a PLD phosphodiesterase 2 domain; sequence YARVNHNKYMVTERATYIGTSNWSGNY. Position 416 (H416) interacts with phosphate. Residue H416 is the Nucleophile of the active site. F438 provides a ligand contact to Mg(2+).

This sequence belongs to the phospholipase D family. As to quaternary structure, homodimer. Interacts with APP. N-glycosylated. Post-translationally, proteolytically processed to a soluble active form that is stable within endosomes and lysosomes. During transport through the secretory pathway becomes proteolysed by cysteine proteases, thereby releasing a stable soluble lysosomal lumenal polypeptide, whereas the transmembrane-bound fragment is rapidly degraded. Its transport route to lysosomes involves ubiquitination and the ESCRT complex. In terms of processing, ubiquitinated at N-terminus. Ubiquitination mediates sorting into lysosomes. Widely expressed. In the brain, high levels of expression are detected in the frontal, temporal and occipital cortices and hippocampus. Expressed at low level in corpus callosum. Expressed in plasmacytoid dendritic cells and monocytes (at protein level).

It localises to the endoplasmic reticulum membrane. The protein resides in the lysosome lumen. It is found in the early endosome membrane. The protein localises to the late endosome membrane. Its subcellular location is the golgi apparatus membrane. It localises to the endosome membrane. It carries out the reaction Exonucleolytic cleavage in the 5'- to 3'-direction to yield nucleoside 3'-phosphates.. The catalysed reaction is a 5'-end 5'-dephospho-ribonucleotidyl-ribonucleotide-RNA + H2O = a ribonucleoside 3'-phosphate + a 5'-end dephospho-ribonucleoside-RNA + H(+). It catalyses the reaction a ribonucleoside 3'-phosphate-2'-3'-cyclophospho-GMP + H2O = a ribonucleoside 3'-phosphate + 2',3'-cyclophospho-GMP + H(+). The enzyme catalyses a 5'-end 5'-dephospho-2'-deoxyribonucleotidyl-2'-deoxyribonucleotide in single-stranded DNA + H2O = a 5'-end dephospho-2'-deoxyribonucleoside in single-stranded DNA + a 2'-deoxyribonucleoside 3'-phosphate + H(+). It carries out the reaction a 5'-end 5'-phospho-2'-deoxyribonucleotide in single-stranded DNA + H2O = a 5'-end 5'-dephospho-2'-deoxyribonucleotide in single-stranded DNA + phosphate. The catalysed reaction is a 3-lyso-sn-glycero-1-phospho-(3'-acyl-1'-sn-glycerol) + a 1-acyl-sn-glycerol = a 3-acyl-sn-glycero-1-phospho-(3'-acyl-1'-sn-glycerol) + glycerol. It catalyses the reaction 3-lyso-sn-glycero-1-phospho-(3'-(9Z-octadecenoyl)-1'-sn-glycerol) + 1-(9Z-octadecenoyl)-sn-glycerol = 3-(9Z-octadecenoyl)-sn-glycero-1-phospho-(3'-(9Z-octadecenoyl)-1'-sn-glycerol) + glycerol. The exonuclease activity toward ssDNA substrate is Ca(2+) and Mg(2+)-independent, but it is inhibited by Fe(2+), Cu(2+) and to a lesser extent Zn(2+) ions. In terms of biological role, 5'-&gt;3' exonuclease that hydrolyzes the phosphodiester bond of single-stranded DNA (ssDNA) and RNA molecules to form nucleoside 3'-monophosphates and 5'-end 5'-hydroxy deoxyribonucleotide/ribonucleotide fragments. Partially redundant with PLD4, can cleave all four nucleotides displaying higher efficiency for ssDNA and RNA fragments initiated with uridine and guanosine residues and lower efficiency for cytidine-initiated substrates. As a result, it does not always degrade polynucleotides to the single nucleotide level, it can stall at specific sites sparing certain fragments from exonucleolytic degradation. Processes self and pathogenic ssDNA and RNA molecules that reach the endolysosomal compartment via phagocytosis or autophagy and may serve as 'danger' signals for recognition by innate immune receptors such as toll-like receptors (TLRs). Degrades mitochondrial CpG-rich ssDNA fragments to prevent TLR9 activation and autoinflammatory response, but it can cleave viral RNA to generate ligands for TLR7 activation and initiate antiviral immune responses. In plasmacytoid dendritic cells, it cooperates with endonuclease RNASET2 to release 2',3'-cyclic guanosine monophosphate (2',3'-cGMP), a potent stimulatory ligand for TLR7. Produces 2',3'-cGMPs and cytidine-rich RNA fragments that occupy TLR7 ligand-binding pockets and trigger a signaling-competent state. Can exert polynucleotide phosphatase activity toward 5'-phosphorylated ssDNA substrates although at a slow rate. Transphosphatidylase that catalyzes the exchange with R to S stereo-inversion of the glycerol moiety between (S,R)-lysophosphatidylglycerol (LPG) and monoacylglycerol (MAG) substrates to yield (S,S)-bis(monoacylglycero)phosphate (BMP). Can synthesize a variety of (S,S)-BMPs representing the main phospholipid constituent of lysosomal intralumenal vesicle (ILV) membranes that bind acid hydrolases for lipid degradation. Regulates the homeostasis and interorganellar communication of the endolysosomal system with an overall impact on cellular removal of dysfunctional organelles via autophagy as well as proper protein and lipid turnover. May play a role in myotube formation in response to ER stress. This is 5'-3' exonuclease PLD3 from Homo sapiens (Human).